We begin with the raw amino-acid sequence, 227 residues long: UPF0173 metal-dependent hydrolase BCAH187_A4741 (227 aa).

It belongs to the UPF0173 family.

The sequence is that of UPF0173 metal-dependent hydrolase BCAH187_A4741 from Bacillus cereus (strain AH187).